We begin with the raw amino-acid sequence, 284 residues long: Diaminopimelate epimerase (284 aa).

3 residues coordinate substrate: Asn-20, Gln-53, and Asn-73. The Proton donor role is filled by Cys-82. Substrate contacts are provided by residues 83–84, Asn-167, Asn-200, and 218–219; these read GN and ER. The active-site Proton acceptor is Cys-227. 228 to 229 contributes to the substrate binding site; it reads GS.

It belongs to the diaminopimelate epimerase family. Homodimer.

It is found in the cytoplasm. The catalysed reaction is (2S,6S)-2,6-diaminopimelate = meso-2,6-diaminopimelate. It participates in amino-acid biosynthesis; L-lysine biosynthesis via DAP pathway; DL-2,6-diaminopimelate from LL-2,6-diaminopimelate: step 1/1. In terms of biological role, catalyzes the stereoinversion of LL-2,6-diaminopimelate (L,L-DAP) to meso-diaminopimelate (meso-DAP), a precursor of L-lysine and an essential component of the bacterial peptidoglycan. The polypeptide is Diaminopimelate epimerase (Xanthomonas axonopodis pv. citri (strain 306)).